Reading from the N-terminus, the 494-residue chain is UDP-glucose 6-dehydrogenase (494 aa).

Residues 11 to 16, Asp36, Arg41, and 89 to 93 each bind NAD(+); these read GAGYVG and VNTPT. The segment at 88–110 is disordered; the sequence is SVNTPTKTYGMGKGRAADLKYIE. An N6-acetyllysine modification is found at Lys107. Residues 129-135 are allosteric switch region; it reads KSTVPVR. 130-132 lines the NAD(+) pocket; that stretch reads STV. Glu161 acts as the Proton donor/acceptor in catalysis. Substrate is bound by residues 161–165, 220–224, Arg260, and 267–273; these read EFLAE, KLTAN, and KASVGFG. Glu165 provides a ligand contact to NAD(+). The active-site Proton donor/acceptor is Lys220. Cys276 serves as the catalytic Nucleophile. Residue 276 to 279 participates in NAD(+) binding; that stretch reads CFQK. The segment at 321–325 is important for formation of active hexamer structure; the sequence is SLFNT. Residue 338-339 participates in substrate binding; that stretch reads FK. Arg346 serves as a coordination point for NAD(+). Arg442 serves as a coordination point for substrate. The segment at 466 to 494 is disordered; sequence VSSKRIPYAPSGEIPKFSLQDMPNKKPRV. The residue at position 476 (Ser476) is a Phosphoserine.

This sequence belongs to the UDP-glucose/GDP-mannose dehydrogenase family. In terms of assembly, homohexamer.

It catalyses the reaction UDP-alpha-D-glucose + 2 NAD(+) + H2O = UDP-alpha-D-glucuronate + 2 NADH + 3 H(+). It functions in the pathway nucleotide-sugar biosynthesis; UDP-alpha-D-glucuronate biosynthesis; UDP-alpha-D-glucuronate from UDP-alpha-D-glucose: step 1/1. With respect to regulation, UDP-alpha-D-xylose (UDX) acts as a feedback inhibitor. It binds at the same site as the substrate, but functions as allosteric inhibitor by triggering a conformation change that disrupts the active hexameric ring structure and gives rise to an inactive, horseshoe-shaped hexamer. In terms of biological role, catalyzes the formation of UDP-alpha-D-glucuronate, a constituent of complex glycosaminoglycans. Required for the biosynthesis of chondroitin sulfate and heparan sulfate. Required for embryonic development via its role in the biosynthesis of glycosaminoglycans. Required for proper brain and neuronal development. The polypeptide is UDP-glucose 6-dehydrogenase (UGDH) (Bos taurus (Bovine)).